The following is a 518-amino-acid chain: Bifunctional purine biosynthesis protein PurH (518 aa).

One can recognise an MGS-like domain in the interval 1 to 144 (MSKRALISVS…KNHASVTVVC (144 aa)).

This sequence belongs to the PurH family.

It catalyses the reaction (6R)-10-formyltetrahydrofolate + 5-amino-1-(5-phospho-beta-D-ribosyl)imidazole-4-carboxamide = 5-formamido-1-(5-phospho-D-ribosyl)imidazole-4-carboxamide + (6S)-5,6,7,8-tetrahydrofolate. The enzyme catalyses IMP + H2O = 5-formamido-1-(5-phospho-D-ribosyl)imidazole-4-carboxamide. Its pathway is purine metabolism; IMP biosynthesis via de novo pathway; 5-formamido-1-(5-phospho-D-ribosyl)imidazole-4-carboxamide from 5-amino-1-(5-phospho-D-ribosyl)imidazole-4-carboxamide (10-formyl THF route): step 1/1. It functions in the pathway purine metabolism; IMP biosynthesis via de novo pathway; IMP from 5-formamido-1-(5-phospho-D-ribosyl)imidazole-4-carboxamide: step 1/1. This is Bifunctional purine biosynthesis protein PurH from Lactococcus lactis subsp. lactis (strain IL1403) (Streptococcus lactis).